Here is a 189-residue protein sequence, read N- to C-terminus: Chitin synthase 1 (189 aa).

Belongs to the chitin synthase family.

It is found in the cell membrane. The enzyme catalyses [(1-&gt;4)-N-acetyl-beta-D-glucosaminyl](n) + UDP-N-acetyl-alpha-D-glucosamine = [(1-&gt;4)-N-acetyl-beta-D-glucosaminyl](n+1) + UDP + H(+). Polymerizes chitin, a structural polymer of the cell wall and septum, by transferring the sugar moiety of UDP-GlcNAc to the non-reducing end of the growing chitin polymer. The polypeptide is Chitin synthase 1 (CHS1) (Xylohypha bantiana).